The chain runs to 242 residues: Ribose-5-phosphate isomerase A (242 aa).

Substrate-binding positions include 39-42 (SGST), 95-98 (DGAD), and 108-111 (KGGG). Catalysis depends on glutamate 117, which acts as the Proton acceptor. Residue lysine 135 coordinates substrate.

Belongs to the ribose 5-phosphate isomerase family. In terms of assembly, homodimer.

The enzyme catalyses aldehydo-D-ribose 5-phosphate = D-ribulose 5-phosphate. It functions in the pathway carbohydrate degradation; pentose phosphate pathway; D-ribose 5-phosphate from D-ribulose 5-phosphate (non-oxidative stage): step 1/1. Its function is as follows. Catalyzes the reversible conversion of ribose-5-phosphate to ribulose 5-phosphate. This chain is Ribose-5-phosphate isomerase A, found in Chlamydia trachomatis serovar L2 (strain ATCC VR-902B / DSM 19102 / 434/Bu).